Reading from the N-terminus, the 177-residue chain is Large ribosomal subunit protein bL31m (177 aa).

A mitochondrion-targeting transit peptide spans 1-14; that stretch reads MLKSIFAKRFASTG. The interval 36–118 is sufficient for general mitochondrial translation; that stretch reads KSRPAIYHQF…FSVDSTTPNS (83 aa). A sufficient for dosage suppression of COX2 mutation region spans residues 87 to 177; it reads LVVVDANSGG…KLASKKRDKK (91 aa). Positions 111–123 are enriched in polar residues; it reads VDSTTPNSSSETV. Positions 111-144 are disordered; that stretch reads VDSTTPNSSSETVELSEENKKKTQIKKEEKEDVS. Basic and acidic residues predominate over residues 127–144; it reads EENKKKTQIKKEEKEDVS.

Belongs to the bacterial ribosomal protein bL31 family. Highly divergent. In terms of assembly, component of the mitochondrial large ribosomal subunit (mt-LSU). Mature yeast 74S mitochondrial ribosomes consist of a small (37S) and a large (54S) subunit. The 37S small subunit contains a 15S ribosomal RNA (15S mt-rRNA) and 34 different proteins. The 54S large subunit contains a 21S rRNA (21S mt-rRNA) and 46 different proteins.

The protein localises to the mitochondrion. In terms of biological role, component of the mitochondrial ribosome (mitoribosome), a dedicated translation machinery responsible for the synthesis of mitochondrial genome-encoded proteins, including at least some of the essential transmembrane subunits of the mitochondrial respiratory chain. The mitoribosomes are attached to the mitochondrial inner membrane and translation products are cotranslationally integrated into the membrane. Overexpression of bL31m suppresses mutations in the COX2 leader peptide-encoding and initiation codon regions. This is Large ribosomal subunit protein bL31m (MRPL36) from Saccharomyces cerevisiae (strain ATCC 204508 / S288c) (Baker's yeast).